We begin with the raw amino-acid sequence, 530 residues long: Trigger factor (530 aa).

A PPIase FKBP-type domain is found at 162 to 243; that stretch reads DDLVTIDLAG…VTKVCEQELP (82 aa). Positions 432 to 530 are disordered; sequence NALELDRIQP…KTAAKDDKSK (99 aa). 2 stretches are compositionally biased toward basic and acidic residues: residues 459–478 and 501–512; these read SAEK…EKAP and KVVDAKSDDKPA.

It belongs to the FKBP-type PPIase family. Tig subfamily.

It localises to the cytoplasm. The enzyme catalyses [protein]-peptidylproline (omega=180) = [protein]-peptidylproline (omega=0). Its function is as follows. Involved in protein export. Acts as a chaperone by maintaining the newly synthesized protein in an open conformation. Functions as a peptidyl-prolyl cis-trans isomerase. The polypeptide is Trigger factor (Cutibacterium acnes (strain DSM 16379 / KPA171202) (Propionibacterium acnes)).